The primary structure comprises 272 residues: Alcohol dehydrogenase-related 31 kDa protein (272 aa).

11-34 (YVADCGGIALETSKVLMTKNIAKL) serves as a coordination point for NAD(+). Substrate is bound at residue serine 139. The active-site Proton acceptor is tyrosine 152.

The protein belongs to the short-chain dehydrogenases/reductases (SDR) family.

This chain is Alcohol dehydrogenase-related 31 kDa protein (Adhr), found in Drosophila mauritiana (Fruit fly).